The following is a 444-amino-acid chain: MKVVPSLLLSVLLAQVWLVPGLAPSPQSPETPAPQNQTSRVVQAPKEEEEDEQEASEEKASEEEKAWLMASRQQLAKETSNFGFSLLRKISMRHDGNMVFSPFGMSLAMTGLMLGATGPTETQIKRGLHLQALKPTKPGLLPSLFKGLRETLSRNLELGLTQGSFAFIHKDFDVKETFFNLSKRYFDTECVPMNFRNASQAKRLMNHYINKETRGKIPKLFDEINPETKLILVDYILFKGKWLTPFDPVFTEVDTFHLDKYKTIKVPMMYGAGKFASTFDKNFRCHVLKLPYQGNATMLVVLMEKMGDHLALEDYLTTDLVETWLRNMKTRNMEVFFPKFKLDQKYEMHELLRQMGIRRIFSPFADLSELSATGRNLQVSRVLQRTVIEVDERGTEAVAGILSEITAYSMPPVIKVDRPFHFMIYEETSGMLLFLGRVVNPTLL.

A signal peptide spans 1-21; the sequence is MKVVPSLLLSVLLAQVWLVPG. The tract at residues 24-65 is disordered; the sequence is PSPQSPETPAPQNQTSRVVQAPKEEEEDEQEASEEKASEEEK. N-linked (GlcNAc...) asparagine glycosylation occurs at asparagine 36. Serine 56 carries the post-translational modification Phosphoserine; by FAM20C. Residues 56-65 are compositionally biased toward basic and acidic residues; sequence SEEKASEEEK. Residues 136–153 are heparin-binding; it reads TKPGLLPSLFKGLRETLS. 3 N-linked (GlcNAc...) asparagine glycosylation sites follow: asparagine 180, asparagine 197, and asparagine 295.

This sequence belongs to the serpin family. Interacts with PROZ. Post-translationally, phosphorylated by FAM20C in the extracellular medium. Expressed by the liver and secreted in plasma.

Its subcellular location is the secreted. In terms of biological role, inhibits activity of the coagulation protease factor Xa in the presence of PROZ, calcium and phospholipids. Also inhibits factor XIa in the absence of cofactors. This Homo sapiens (Human) protein is Protein Z-dependent protease inhibitor (SERPINA10).